We begin with the raw amino-acid sequence, 201 residues long: Small ribosomal subunit protein uS4 (201 aa).

The disordered stretch occupies residues 19–41 (LVGGSSAYEKRPYPPGQHGRARI). One can recognise an S4 RNA-binding domain in the interval 91–157 (SRLDNVVYRA…LPFEVARETA (67 aa)).

The protein belongs to the universal ribosomal protein uS4 family. As to quaternary structure, part of the 30S ribosomal subunit. Contacts protein S5. The interaction surface between S4 and S5 is involved in control of translational fidelity.

In terms of biological role, one of the primary rRNA binding proteins, it binds directly to 16S rRNA where it nucleates assembly of the body of the 30S subunit. Its function is as follows. With S5 and S12 plays an important role in translational accuracy. The polypeptide is Small ribosomal subunit protein uS4 (Mycobacteroides abscessus (strain ATCC 19977 / DSM 44196 / CCUG 20993 / CIP 104536 / JCM 13569 / NCTC 13031 / TMC 1543 / L948) (Mycobacterium abscessus)).